The primary structure comprises 263 residues: Cell division protein DivIB (263 aa).

Residues methionine 1–leucine 32 are Cytoplasmic-facing. A helical membrane pass occupies residues isoleucine 33–isoleucine 53. The tract at residues threonine 51–tyrosine 123 is alpha. A POTRA domain is found at serine 54–tyrosine 123. At serine 54–asparagine 263 the chain is on the extracellular side. A beta region spans residues lysine 124–glycine 251. The segment at serine 229 to asparagine 263 is gamma.

This sequence belongs to the FtsQ/DivIB family. DivIB subfamily. As to quaternary structure, interacts with FtsL, DivIC and PBP-2B.

The protein resides in the cell membrane. Functionally, cell division protein that may be involved in stabilizing or promoting the assembly of the division complex. Plays an essential role in division at high temperatures, maybe by protecting FtsL from degradation or by promoting formation of the FtsL-DivIC complex. May modulate the transpeptidase activity of PBP-2B. Also required for efficient sporulation at all temperatures. Could be directly involved in the engulfment process or be required to form a sporulation septum competent for engulfment. Influences the Spo0J/Soj system of chromosome segregation. The polypeptide is Cell division protein DivIB (Bacillus subtilis (strain 168)).